The following is a 273-amino-acid chain: Dermonecrotic toxin LapSicTox-alphaIB1ai (273 aa).

Residue His5 is part of the active site. Glu25 and Asp27 together coordinate Mg(2+). Residue His41 is the Nucleophile of the active site. Disulfide bonds link Cys45-Cys51 and Cys47-Cys190. Asp85 lines the Mg(2+) pocket. N-linked (GlcNAc...) asparagine glycosylation occurs at Asn250.

It belongs to the arthropod phospholipase D family. Class II subfamily. Requires Mg(2+) as cofactor. As to expression, expressed by the venom gland.

The protein resides in the secreted. It catalyses the reaction an N-(acyl)-sphingosylphosphocholine = an N-(acyl)-sphingosyl-1,3-cyclic phosphate + choline. The catalysed reaction is an N-(acyl)-sphingosylphosphoethanolamine = an N-(acyl)-sphingosyl-1,3-cyclic phosphate + ethanolamine. It carries out the reaction a 1-acyl-sn-glycero-3-phosphocholine = a 1-acyl-sn-glycero-2,3-cyclic phosphate + choline. The enzyme catalyses a 1-acyl-sn-glycero-3-phosphoethanolamine = a 1-acyl-sn-glycero-2,3-cyclic phosphate + ethanolamine. Its function is as follows. Dermonecrotic toxins cleave the phosphodiester linkage between the phosphate and headgroup of certain phospholipids (sphingolipid and lysolipid substrates), forming an alcohol (often choline) and a cyclic phosphate. This toxin acts on sphingomyelin (SM). It may also act on ceramide phosphoethanolamine (CPE), lysophosphatidylcholine (LPC) and lysophosphatidylethanolamine (LPE), but not on lysophosphatidylserine (LPS), and lysophosphatidylglycerol (LPG). It acts by transphosphatidylation, releasing exclusively cyclic phosphate products as second products. Induces dermonecrosis, hemolysis, increased vascular permeability, edema, inflammatory response, and platelet aggregation. The protein is Dermonecrotic toxin LapSicTox-alphaIB1ai of Loxosceles apachea (Apache recluse spider).